The chain runs to 301 residues: MRIAILSRNENLYSTSRLKAAGEARGHQVDVIDTLHCDIDIASNNPKIRYMGEELPQYDAVIPRIGASITFYGTAVVRQFEMMGTFCINESVAISRSRDKLRSLQLLSRKGIGLPKTGFASRPDKIQDLIKNVGGAPLVIKLLEGTQGIGVVLAETNKAAESVIEAFMGLKANILVQEFIEEANGADIRCFVVGNKVIAAMKRQAGEGEFRSNLHRGGTAQLVKLTKEERATAINAAKIMGLNLCGVDILQSKNGPVVMEVNSSPGLEGIEKSTGKDVADMIFEFIEKNAKPNANRTRGKG.

In terms of domain architecture, ATP-grasp spans 104 to 287; it reads LQLLSRKGIG…VADMIFEFIE (184 aa). ATP-binding positions include K141, 178–179, D187, and 211–213; these read EF and RSN. The Mg(2+) site is built by D248, E260, and N262. Mn(2+) contacts are provided by D248, E260, and N262.

This sequence belongs to the RimK family. Requires Mg(2+) as cofactor. It depends on Mn(2+) as a cofactor.

The protein is Probable alpha-L-glutamate ligase of Vibrio atlanticus (strain LGP32) (Vibrio splendidus (strain Mel32)).